Consider the following 262-residue polypeptide: Pyridoxine 5'-phosphate synthase (262 aa).

Residue Asn-6 participates in 3-amino-2-oxopropyl phosphate binding. 1-deoxy-D-xylulose 5-phosphate is bound at residue 8–9 (DH). Arg-17 lines the 3-amino-2-oxopropyl phosphate pocket. The active-site Proton acceptor is the His-41. 2 residues coordinate 1-deoxy-D-xylulose 5-phosphate: Arg-43 and His-48. Glu-68 serves as the catalytic Proton acceptor. Thr-98 contributes to the 1-deoxy-D-xylulose 5-phosphate binding site. Residue His-210 is the Proton donor of the active site. 3-amino-2-oxopropyl phosphate is bound by residues Gly-211 and 232–233 (GQ).

Belongs to the PNP synthase family. In terms of assembly, homooctamer; tetramer of dimers.

It localises to the cytoplasm. The catalysed reaction is 3-amino-2-oxopropyl phosphate + 1-deoxy-D-xylulose 5-phosphate = pyridoxine 5'-phosphate + phosphate + 2 H2O + H(+). Its pathway is cofactor biosynthesis; pyridoxine 5'-phosphate biosynthesis; pyridoxine 5'-phosphate from D-erythrose 4-phosphate: step 5/5. In terms of biological role, catalyzes the complicated ring closure reaction between the two acyclic compounds 1-deoxy-D-xylulose-5-phosphate (DXP) and 3-amino-2-oxopropyl phosphate (1-amino-acetone-3-phosphate or AAP) to form pyridoxine 5'-phosphate (PNP) and inorganic phosphate. This Campylobacter jejuni subsp. jejuni serotype O:23/36 (strain 81-176) protein is Pyridoxine 5'-phosphate synthase.